Consider the following 263-residue polypeptide: MKPTTIALLQKCKQEKKRFATITAYDHSFAKLFADEGINVLLVGDSLGMTVQGHDSTLPVTVEDIAYHTRAVRRGAPNSLLLADLPFMAYATPEQTFENAAIVMRAGANMVKLEGGAWLADTVKMLAERAVPVCGHLGLTPQSVNVFGGYKVQGRGDAAQTLFDDALALEAAGAQLLVLECVPVELAKRITDALTIPVIGIGAGNVTDGQILVMHDAFGITGGHIPKFAKNFLAEAGDIRAAVRQYIAEVESGVYPGEEHSFH.

Positions 45 and 84 each coordinate Mg(2+). 3-methyl-2-oxobutanoate contacts are provided by residues 45-46 (DS), aspartate 84, and lysine 112. Mg(2+) is bound at residue glutamate 114. Catalysis depends on glutamate 180, which acts as the Proton acceptor.

This sequence belongs to the PanB family. Homodecamer; pentamer of dimers. Mg(2+) is required as a cofactor.

The protein localises to the cytoplasm. It catalyses the reaction 3-methyl-2-oxobutanoate + (6R)-5,10-methylene-5,6,7,8-tetrahydrofolate + H2O = 2-dehydropantoate + (6S)-5,6,7,8-tetrahydrofolate. It participates in cofactor biosynthesis; (R)-pantothenate biosynthesis; (R)-pantoate from 3-methyl-2-oxobutanoate: step 1/2. In terms of biological role, catalyzes the reversible reaction in which hydroxymethyl group from 5,10-methylenetetrahydrofolate is transferred onto alpha-ketoisovalerate to form ketopantoate. This chain is 3-methyl-2-oxobutanoate hydroxymethyltransferase, found in Klebsiella pneumoniae (strain 342).